Here is a 585-residue protein sequence, read N- to C-terminus: MKEKKNIPTTQSLLSSFDGSRKVYEKGSRPDILVPKREIALTQTVTQAGMIQNEPIRVYDTSGPYTDEHAHIDVTKGLNRLRAAWVEERGDTESYEGRHVKPEDNGYRSRNGSHQHIHTDFHHKPLRAKQGACVTQMHYAKKGIVTPEMEFIALREGLSPEFVREEVASGRAVIPANINHPESEPMIIGRNFHVKINANIGNSAVTSSIDEEVEKMTWAIRWGTDTMMDLSTGKDIHTTREWIIRNCPVPVGTVPIYQALEKVNGVAEDLTWDVYRDTLIEQAEQGVDYFTIHAGVRLRYIPLTVDRVTGIVSRGGAIMARWCLAHHQENFLYTHFEDICEIMKTYDIAFSLGDGLRPGSIADANDEAQFAELETLGELTEIAWKHDVQVMIEGPGHVPMDKIKENVDKQMEICKEAPFYTLGPLTTDIAPGYDHITSAIGAAMIGWYGTAMLCYVTPKEHLGLPNKEDVREGVIAYKIAAHAADLAKGHPAAQKRDDALSKARFEFRWRDQFNLSLDPERAMAFHDETLPAEGAKTAHFCSMCGPKFCSMKISHDIRNQSEEVKKEMEKKAKEFISGGSQIYSS.

The span at 89-107 shows a compositional bias: basic and acidic residues; sequence RGDTESYEGRHVKPEDNGY. A disordered region spans residues 89–116; the sequence is RGDTESYEGRHVKPEDNGYRSRNGSHQH. Substrate-binding positions include Asn-199, Met-228, Tyr-257, His-293, 313 to 315, 354 to 357, and Glu-393; these read SRG and DGLR. Zn(2+) is bound at residue His-397. Tyr-420 is a binding site for substrate. Position 461 (His-461) interacts with Zn(2+). 3 residues coordinate [4Fe-4S] cluster: Cys-541, Cys-544, and Cys-549.

This sequence belongs to the ThiC family. [4Fe-4S] cluster is required as a cofactor.

The catalysed reaction is 5-amino-1-(5-phospho-beta-D-ribosyl)imidazole + S-adenosyl-L-methionine = 4-amino-2-methyl-5-(phosphooxymethyl)pyrimidine + CO + 5'-deoxyadenosine + formate + L-methionine + 3 H(+). Its pathway is cofactor biosynthesis; thiamine diphosphate biosynthesis. In terms of biological role, catalyzes the synthesis of the hydroxymethylpyrimidine phosphate (HMP-P) moiety of thiamine from aminoimidazole ribotide (AIR) in a radical S-adenosyl-L-methionine (SAM)-dependent reaction. The chain is Phosphomethylpyrimidine synthase from Bacillus pumilus (strain SAFR-032).